The primary structure comprises 255 residues: Imidazole glycerol phosphate synthase subunit HisF (255 aa).

Active-site residues include Asp12 and Asp131.

Belongs to the HisA/HisF family. Heterodimer of HisH and HisF.

Its subcellular location is the cytoplasm. The enzyme catalyses 5-[(5-phospho-1-deoxy-D-ribulos-1-ylimino)methylamino]-1-(5-phospho-beta-D-ribosyl)imidazole-4-carboxamide + L-glutamine = D-erythro-1-(imidazol-4-yl)glycerol 3-phosphate + 5-amino-1-(5-phospho-beta-D-ribosyl)imidazole-4-carboxamide + L-glutamate + H(+). Its pathway is amino-acid biosynthesis; L-histidine biosynthesis; L-histidine from 5-phospho-alpha-D-ribose 1-diphosphate: step 5/9. IGPS catalyzes the conversion of PRFAR and glutamine to IGP, AICAR and glutamate. The HisF subunit catalyzes the cyclization activity that produces IGP and AICAR from PRFAR using the ammonia provided by the HisH subunit. This is Imidazole glycerol phosphate synthase subunit HisF from Vesicomyosocius okutanii subsp. Calyptogena okutanii (strain HA).